The primary structure comprises 1039 residues: uncharacterized protein (1039 aa).

Residues 1 to 19 (MSLLMAHRKSKSSQRKLRN) are compositionally biased toward basic residues. Residues 1–38 (MSLLMAHRKSKSSQRKLRNRSSSLTPQKRRIRASKGSH) form a disordered region.

This is an uncharacterized protein from Sinorhizobium fredii (strain NBRC 101917 / NGR234).